The primary structure comprises 404 residues: Putative glutamate--cysteine ligase 2 (404 aa).

The tract at residues Gly-377 to Glu-404 is disordered.

The protein belongs to the glutamate--cysteine ligase type 2 family. YbdK subfamily.

It catalyses the reaction L-cysteine + L-glutamate + ATP = gamma-L-glutamyl-L-cysteine + ADP + phosphate + H(+). Its function is as follows. ATP-dependent carboxylate-amine ligase which exhibits weak glutamate--cysteine ligase activity. The chain is Putative glutamate--cysteine ligase 2 from Pseudomonas aeruginosa (strain UCBPP-PA14).